A 432-amino-acid polypeptide reads, in one-letter code: Transcriptional adapter 3 (432 aa).

Lys21 is covalently cross-linked (Glycyl lysine isopeptide (Lys-Gly) (interchain with G-Cter in SUMO2)). Residues 40 to 69 (IEELDTLQLELETLLSSASRRLRVLEAETQ) adopt a coiled-coil conformation. The disordered stretch occupies residues 87-127 (GRDHELGAPPKHGKPKKQKLEGKAGHGPGPGPGRPKSKNLQ). Lys129 participates in a covalent cross-link: Glycyl lysine isopeptide (Lys-Gly) (interchain with G-Cter in SUMO2). Composition is skewed to basic and acidic residues over residues 211–223 (DGAR…DKKK) and 232–251 (LDTK…HEQP). Disordered regions lie at residues 211–257 (DGAR…GCPF) and 271–319 (ENII…SRIK). Phosphoserine occurs at positions 280 and 298. Polar residues predominate over residues 295–305 (ASTSPRNQNKP). Positions 367–407 (LLRLAKEEVSRQELRQRVRMADNEVMDAFRKIMAARQKKRT) form a coiled coil. Position 418 is an N6-acetyllysine (Lys418).

This sequence belongs to the NGG1 family. In terms of assembly, the PCAF complex is composed of a number of TBP-associated factors (TAFS), such as TAF5, TAF5L, TAF6, TAF6L, TAF9, TAF10 and TAF12, PCAF, and also PCAF-associated factors (PAFs), such as TADA2L/ADA2, TADA3L/ADA3 and SPT3. Interacts directly with TADA2L and PCAF and also with the high-risk HPV oncoprotein E6. Component of the STAGA transcription coactivator-HAT complex, at least composed of SUPT3H, GCN5L2, TAF5L, TAF6L, SUPT7L, TADA3L, TAD1L, TAF10, TAF12, TRRAP and TAF9. Component of the TFTC-HAT complex. Component of the ADA2A-containing complex (ATAC), composed of KAT14, KAT2A, TADA2L, TADA3L, ZZ3, MBIP, WDR5, YEATS2, CCDC101 and DR1.

It is found in the nucleus. Functionally, functions as a component of the PCAF complex. The PCAF complex is capable of efficiently acetylating histones in a nucleosomal context. The PCAF complex could be considered as the human version of the yeast SAGA complex. Also known as a coactivator for p53/TP53-dependent transcriptional activation. Component of the ATAC complex, a complex with histone acetyltransferase activity on histones H3 and H4. This chain is Transcriptional adapter 3 (TADA3), found in Pongo abelii (Sumatran orangutan).